Here is a 411-residue protein sequence, read N- to C-terminus: Allantoate amidohydrolase (411 aa).

4 residues coordinate Zn(2+): His81, Asp92, Glu127, and His190. Allantoate contacts are provided by Arg215, Asn275, and Arg288. His382 serves as a coordination point for Zn(2+).

This sequence belongs to the peptidase M20 family. In terms of assembly, homodimer. Zn(2+) is required as a cofactor.

Its subcellular location is the cytoplasm. The enzyme catalyses allantoate + H2O + 2 H(+) = (S)-2-ureidoglycine + NH4(+) + CO2. It functions in the pathway nitrogen metabolism; (S)-allantoin degradation. Its activity is regulated as follows. Sulfate could be an allosteric effector of the enzyme that is responsible for stabilizing substrate binding. In addition, this anion effector may act as a counterion during enzyme-mediated catalysis. Its function is as follows. Involved in the anaerobic nitrogen utilization via the assimilation of allantoin. Catalyzes specifically the hydrolysis of allantoate to yield CO2, NH3 and S-ureidoglycine, which is unstable and readily undergoes a second deamination by S-ureidoglycine aminohydrolase AllE to yield S-ureidoglycolate and NH3. In vivo, the spontaneous release of S-ureidoglycolate and ammonia from S-ureidoglycine appears to be too slow to sustain an efficient flux of nitrogen. The sequence is that of Allantoate amidohydrolase from Escherichia coli (strain K12).